The following is a 644-amino-acid chain: 1-deoxy-D-xylulose-5-phosphate synthase (644 aa).

Residues H84 and 125-127 (GHS) contribute to the thiamine diphosphate site. D156 serves as a coordination point for Mg(2+). Thiamine diphosphate contacts are provided by residues 157-158 (GA), N185, Y296, and E378. N185 is a binding site for Mg(2+).

It belongs to the transketolase family. DXPS subfamily. As to quaternary structure, homodimer. Mg(2+) serves as cofactor. The cofactor is thiamine diphosphate.

It carries out the reaction D-glyceraldehyde 3-phosphate + pyruvate + H(+) = 1-deoxy-D-xylulose 5-phosphate + CO2. It participates in metabolic intermediate biosynthesis; 1-deoxy-D-xylulose 5-phosphate biosynthesis; 1-deoxy-D-xylulose 5-phosphate from D-glyceraldehyde 3-phosphate and pyruvate: step 1/1. Catalyzes the acyloin condensation reaction between C atoms 2 and 3 of pyruvate and glyceraldehyde 3-phosphate to yield 1-deoxy-D-xylulose-5-phosphate (DXP). In Paramagnetospirillum magneticum (strain ATCC 700264 / AMB-1) (Magnetospirillum magneticum), this protein is 1-deoxy-D-xylulose-5-phosphate synthase.